The primary structure comprises 426 residues: Anhydromevalonate phosphate decarboxylase (426 aa).

The Mn(2+) site is built by Asn-148 and Glu-211. Asp-255 acts as the Proton acceptor in catalysis.

It belongs to the UbiD family. Requires prenylated FMN as cofactor. Mn(2+) serves as cofactor.

It carries out the reaction (2E)-3-methyl-5-phosphooxypent-2-enoate + H(+) = isopentenyl phosphate + CO2. Its pathway is isoprenoid biosynthesis; isopentenyl diphosphate biosynthesis via mevalonate pathway. Its function is as follows. Catalyzes the conversion of trans-anhydromevalonate 5-phosphate (tAHMP) into isopentenyl phosphate. Involved in the archaeal mevalonate (MVA) pathway, which provides fundamental precursors for isoprenoid biosynthesis, such as isopentenyl diphosphate (IPP) and dimethylallyl diphosphate (DMAPP). The protein is Anhydromevalonate phosphate decarboxylase of Archaeoglobus fulgidus (strain ATCC 49558 / DSM 4304 / JCM 9628 / NBRC 100126 / VC-16).